The sequence spans 532 residues: Probable cytochrome c oxidase subunit 1 (532 aa).

The next 8 helical transmembrane spans lie at 33 to 53 (IMYI…SLLF), 74 to 94 (VLIT…ALFG), 95 to 115 (GFGN…FPRL), 118 to 138 (ISFW…FVDG), 163 to 183 (MAIF…INLI), 200 to 220 (PLFV…MPVL), 252 to 272 (LFWF…FGIV), and 284 to 304 (IFGY…GFIV). Fe(II)-heme a is bound at residue histidine 79. Histidine 258 and tyrosine 262 together coordinate Cu cation. Positions 307 and 308 each coordinate Cu cation. Helical transmembrane passes span 318–338 (ALIY…IKIF) and 355–375 (MLFS…GIIL). Histidine 393 is a heme a3 binding site. Helical transmembrane passes span 394–414 (FHYT…YYWF), 431–451 (FWIT…LGLA), and 473–493 (IGAG…FYTL). Histidine 395 contacts Fe(II)-heme a.

This sequence belongs to the heme-copper respiratory oxidase family.

The protein resides in the cell membrane. It catalyses the reaction 4 Fe(II)-[cytochrome c] + O2 + 8 H(+)(in) = 4 Fe(III)-[cytochrome c] + 2 H2O + 4 H(+)(out). The protein operates within energy metabolism; oxidative phosphorylation. Functionally, cytochrome c oxidase is the component of the respiratory chain that catalyzes the reduction of oxygen to water. Subunits 1-3 form the functional core of the enzyme complex. CO I is the catalytic subunit of the enzyme. Electrons originating in cytochrome c are transferred via the copper A center of subunit 2 and heme A of subunit 1 to the bimetallic center formed by heme A3 and copper B. The sequence is that of Probable cytochrome c oxidase subunit 1 (ctaD) from Rickettsia conorii (strain ATCC VR-613 / Malish 7).